The primary structure comprises 238 residues: LexA repressor (238 aa).

Positions Phe26–Thr46 form a DNA-binding region, H-T-H motif. Residues Ser159 and Lys197 each act as for autocatalytic cleavage activity in the active site.

This sequence belongs to the peptidase S24 family. Homodimer.

It catalyses the reaction Hydrolysis of Ala-|-Gly bond in repressor LexA.. Represses a number of genes involved in the response to DNA damage (SOS response), including recA and lexA. In the presence of single-stranded DNA, RecA interacts with LexA causing an autocatalytic cleavage which disrupts the DNA-binding part of LexA, leading to derepression of the SOS regulon and eventually DNA repair. The sequence is that of LexA repressor from Rhodobacter capsulatus (Rhodopseudomonas capsulata).